Here is a 102-residue protein sequence, read N- to C-terminus: Small ribosomal subunit protein uS10 (102 aa).

Belongs to the universal ribosomal protein uS10 family. Part of the 30S ribosomal subunit.

Involved in the binding of tRNA to the ribosomes. This chain is Small ribosomal subunit protein uS10, found in Methylobacterium radiotolerans (strain ATCC 27329 / DSM 1819 / JCM 2831 / NBRC 15690 / NCIMB 10815 / 0-1).